The chain runs to 430 residues: ATP-dependent RNA helicase RhlB (430 aa).

The Q motif signature appears at Q9–A37. The Helicase ATP-binding domain maps to L40–V219. Residue A53–T60 participates in ATP binding. Residues D165–D168 carry the DEAD box motif. In terms of domain architecture, Helicase C-terminal spans R245–M390. Residues D392–D430 are disordered.

It belongs to the DEAD box helicase family. RhlB subfamily. Component of the RNA degradosome, which is a multiprotein complex involved in RNA processing and mRNA degradation.

Its subcellular location is the cytoplasm. The catalysed reaction is ATP + H2O = ADP + phosphate + H(+). Functionally, DEAD-box RNA helicase involved in RNA degradation. Has RNA-dependent ATPase activity and unwinds double-stranded RNA. The polypeptide is ATP-dependent RNA helicase RhlB (Pectobacterium carotovorum subsp. carotovorum (strain PC1)).